We begin with the raw amino-acid sequence, 354 residues long: E2F transcription factor-like E2FF (354 aa).

The DNA-binding element occupies 21–86 (RKEKSLGVLV…RGKNQYSWKG (66 aa)). The interval 104 to 143 (ERLGYSSSNNSDKVSNGCEREEPLTLTPDDQENSSSSKMD) is disordered. Polar residues predominate over residues 108–117 (YSSSNNSDKV). The DNA-binding element occupies 145 to 225 (KKEKSLWLLA…TRKPAYRWLG (81 aa)).

Belongs to the E2F/DP family. In terms of tissue distribution, high expression in young cotyledons and leaves, hypocotyls, shoot apical meristem, roots and mature pollen grains, moderate in developing trichomes, flowers and at early stages of developing anthers, and barely detectable in mature leaves. Not detected in primary root meristem, emerging lateral roots, pistils, developing embryos and siliques.

It localises to the nucleus. It is found in the cytoplasm. In terms of biological role, inhibitor of E2F-dependent activation of gene expression. Binds specifically the E2 recognition site without interacting with DP proteins and prevents transcription activation by E2F/DP heterodimers. Does not bind retinoblastoma-related proteins. Acts as a growth regulator but is not associated with changes in the expression of cell cycle marker genes or in nuclear ploidy levels. Has no effect on cell proliferation, but may repress cell wall biosynthesis genes during cell elongation in differentiated cells. The chain is E2F transcription factor-like E2FF (E2FF) from Arabidopsis thaliana (Mouse-ear cress).